Here is a 196-residue protein sequence, read N- to C-terminus: Putative NADH dehydrogenase/NAD(P)H nitroreductase Pnuc_0932 (196 aa).

Belongs to the nitroreductase family. HadB/RutE subfamily. FMN serves as cofactor.

The sequence is that of Putative NADH dehydrogenase/NAD(P)H nitroreductase Pnuc_0932 from Polynucleobacter asymbioticus (strain DSM 18221 / CIP 109841 / QLW-P1DMWA-1) (Polynucleobacter necessarius subsp. asymbioticus).